Consider the following 709-residue polypeptide: Polyribonucleotide nucleotidyltransferase (709 aa).

The Mg(2+) site is built by D485 and D491. In terms of domain architecture, KH spans 552 to 611 (PRIYTMKIDPKKIKDVIGKGGATIRSLTEETGTSIDIDDDGTVKIAAVDSNAAKNVMGRI). The S1 motif domain maps to 621–689 (GAIYKGKVTR…RQGRIRLTMK (69 aa)).

This sequence belongs to the polyribonucleotide nucleotidyltransferase family. In terms of assembly, component of the RNA degradosome, which is a multiprotein complex involved in RNA processing and mRNA degradation. The cofactor is Mg(2+).

The protein localises to the cytoplasm. It carries out the reaction RNA(n+1) + phosphate = RNA(n) + a ribonucleoside 5'-diphosphate. Its function is as follows. Involved in mRNA degradation. Catalyzes the phosphorolysis of single-stranded polyribonucleotides processively in the 3'- to 5'-direction. This is Polyribonucleotide nucleotidyltransferase from Haemophilus influenzae (strain PittEE).